The chain runs to 58 residues: uncharacterized protein (58 aa).

The protein to A.fulgidus AF2407.1.

This is an uncharacterized protein from Pyrococcus abyssi (strain GE5 / Orsay).